Consider the following 103-residue polypeptide: Large ribosomal subunit protein bL21 (103 aa).

Belongs to the bacterial ribosomal protein bL21 family. Part of the 50S ribosomal subunit. Contacts protein L20.

This protein binds to 23S rRNA in the presence of protein L20. The sequence is that of Large ribosomal subunit protein bL21 from Amoebophilus asiaticus (strain 5a2).